Here is a 388-residue protein sequence, read N- to C-terminus: Succinate--CoA ligase [ADP-forming] subunit beta (388 aa).

The 236-residue stretch at 9–244 (KQLFARYGLP…PSQEDPREAQ (236 aa)) folds into the ATP-grasp domain. ATP is bound by residues lysine 46, 53–55 (GRG), glutamate 99, threonine 102, and glutamate 107. Residues asparagine 199 and aspartate 213 each coordinate Mg(2+). Substrate contacts are provided by residues asparagine 264 and 321 to 323 (GIV).

The protein belongs to the succinate/malate CoA ligase beta subunit family. Heterotetramer of two alpha and two beta subunits. Mg(2+) is required as a cofactor.

The enzyme catalyses succinate + ATP + CoA = succinyl-CoA + ADP + phosphate. The catalysed reaction is GTP + succinate + CoA = succinyl-CoA + GDP + phosphate. Its pathway is carbohydrate metabolism; tricarboxylic acid cycle; succinate from succinyl-CoA (ligase route): step 1/1. Succinyl-CoA synthetase functions in the citric acid cycle (TCA), coupling the hydrolysis of succinyl-CoA to the synthesis of either ATP or GTP and thus represents the only step of substrate-level phosphorylation in the TCA. The beta subunit provides nucleotide specificity of the enzyme and binds the substrate succinate, while the binding sites for coenzyme A and phosphate are found in the alpha subunit. The polypeptide is Succinate--CoA ligase [ADP-forming] subunit beta (Photorhabdus laumondii subsp. laumondii (strain DSM 15139 / CIP 105565 / TT01) (Photorhabdus luminescens subsp. laumondii)).